The sequence spans 250 residues: Hydroxyacylglutathione hydrolase (250 aa).

Positions 53, 55, 57, 58, 110, 127, and 165 each coordinate Zn(2+).

This sequence belongs to the metallo-beta-lactamase superfamily. Glyoxalase II family. As to quaternary structure, monomer. It depends on Zn(2+) as a cofactor.

It carries out the reaction an S-(2-hydroxyacyl)glutathione + H2O = a 2-hydroxy carboxylate + glutathione + H(+). Its pathway is secondary metabolite metabolism; methylglyoxal degradation; (R)-lactate from methylglyoxal: step 2/2. Functionally, thiolesterase that catalyzes the hydrolysis of S-D-lactoyl-glutathione to form glutathione and D-lactic acid. The chain is Hydroxyacylglutathione hydrolase from Photorhabdus laumondii subsp. laumondii (strain DSM 15139 / CIP 105565 / TT01) (Photorhabdus luminescens subsp. laumondii).